Reading from the N-terminus, the 359-residue chain is Alpha-N-acetylneuraminide alpha-2,8-sialyltransferase (359 aa).

The Cytoplasmic portion of the chain corresponds to 1–28; the sequence is MWGRWRGAGGRRGVAQPVIPQMKLLGGR. Residues 29 to 49 traverse the membrane as a helical; Signal-anchor for type II membrane protein segment; the sequence is VPLGASALGLLIVCWFYIFPG. At 50 to 359 the chain is on the lumenal side; that stretch reads GERLPGHKEM…KKDVSSKKPH (310 aa). Residues asparagine 73 and asparagine 121 are each glycosylated (N-linked (GlcNAc...) asparagine). 2 cysteine pairs are disulfide-bonded: cysteine 140–cysteine 289 and cysteine 154–cysteine 349. Residues asparagine 145 and asparagine 168 each coordinate CMP-N-acetyl-beta-neuraminate. An N-linked (GlcNAc...) asparagine glycan is attached at asparagine 247. Residues serine 276, threonine 277, glycine 278, tryptophan 298, and histidine 312 each coordinate CMP-N-acetyl-beta-neuraminate. The active-site Proton donor/acceptor is the histidine 324.

Belongs to the glycosyltransferase 29 family. Expressed in the dorsal blastopore lip and in the presumptive neuroectoderm in stage 11 embryos. During gastrulation, strongly expressed in the involuting mesoderm. At stages 13 and 16, expressed in the neural plate and neural fold, paraxial mesoderm and notochord. At stages 19 and 22 (neural tube and early tailbud), strongly expressed in the neural tube and notochord. At the tadpole stage, expressed in the head region, branchial arches and otic and optic primordia. Also localized in the notochord and weakly expressed in the somites. In adults, expressed in the brain and ovary. Isoform 2 (short) is expressed at a low level in the adult testis and muscle, and at a high level in the skin. Isoform 1 (long) is expressed at a high level in the adult lung and kidney. Both isoforms 1 and 2 are expressed in the gut and liver.

It localises to the golgi apparatus membrane. The enzyme catalyses an N-acetyl-alpha-neuraminyl-(2-&gt;3)-beta-D-galactosyl derivative + CMP-N-acetyl-beta-neuraminate = an N-acetyl-alpha-neuraminyl-(2-&gt;8)-N-acetyl-alpha-neuraminyl-(2-&gt;3)-beta-D-galactosyl derivative + CMP + H(+). It carries out the reaction a ganglioside GM3 (d18:1(4E)) + CMP-N-acetyl-beta-neuraminate = a ganglioside GD3 (d18:1(4E)) + CMP + H(+). The catalysed reaction is a ganglioside GD3 (d18:1(4E)) + CMP-N-acetyl-beta-neuraminate = a ganglioside GT3 (d18:1(4E)) + CMP + H(+). It catalyses the reaction a ganglioside GD1a (d18:1(4E)) + CMP-N-acetyl-beta-neuraminate = a ganglioside GT1a (d18:1(4E)) + CMP + H(+). The enzyme catalyses a ganglioside GT1b (d18:1(4E)) + CMP-N-acetyl-beta-neuraminate = a ganglioside GQ1b (d18:1(4E)) + CMP + H(+). It carries out the reaction a ganglioside GM1b (d18:1(4E)) + CMP-N-acetyl-beta-neuraminate = a ganglioside GD1c (d18:1(4E)) + CMP + H(+). The catalysed reaction is a ganglioside GD3 + CMP-N-acetyl-beta-neuraminate = a ganglioside GT3 + CMP + H(+). It catalyses the reaction [alpha-N-acetylneuraminyl-(2-&gt;8)](n)-alpha-N-acetylneuraminyl-(2-&gt;8)-alpha-N-acetylneuraminyl-(2-&gt;3)-beta-D-galactosyl-(1-&gt;4)-beta-D-glucosyl-(1&lt;-&gt;1)-ceramide + CMP-N-acetyl-beta-neuraminate = [alpha-N-acetylneuraminyl-(2-&gt;8)](n+1)-alpha-N-acetylneuraminyl-(2-&gt;8)-alpha-N-acetylneuraminyl-(2-&gt;3)-beta-D-galactosyl-(1-&gt;4)-beta-D-glucosyl-(1&lt;-&gt;1)-ceramide + CMP + H(+). Its pathway is protein modification; protein glycosylation. It participates in lipid metabolism; sphingolipid metabolism. Its function is as follows. Catalyzes the addition of sialic acid in alpha 2,8-linkage to the sialic acid moiety of the ganglioside GM3 to form ganglioside GD3; gangliosides are a subfamily of complex glycosphingolipds that contain one or more residues of sialic acid. Glycosphingolipids are required for convergence extension movements during early development. Can catalyze the addition of a second alpha-2,8- sialic acid to GD3 to form GT3. Can use GM1b, GD1a and GT1b as acceptor substrates to synthesize GD1c, GT1a and GQ1b respectively. This is Alpha-N-acetylneuraminide alpha-2,8-sialyltransferase from Xenopus laevis (African clawed frog).